Here is a 644-residue protein sequence, read N- to C-terminus: Arginine--tRNA ligase (644 aa).

The 'HIGH' region signature appears at 134–144; that stretch reads VNPTKPLHMGH.

Belongs to the class-I aminoacyl-tRNA synthetase family.

It is found in the cytoplasm. It catalyses the reaction tRNA(Arg) + L-arginine + ATP = L-arginyl-tRNA(Arg) + AMP + diphosphate. In Thermococcus sibiricus (strain DSM 12597 / MM 739), this protein is Arginine--tRNA ligase.